The following is a 1494-amino-acid chain: Neuropathy target esterase sws (1494 aa).

Residues 1–35 (MDVLELLRVSGSNMYYSTFLADAWCYYISNQITMT) are Lumenal-facing. Residues 36 to 56 (MYLYCALGVLSMLFIGWFVYF) form a helical membrane-spanning segment. Over 57–1494 (KRLARLRLRH…NTNNETKNYL (1438 aa)) the chain is Cytoplasmic. Position 176-303 (176-303 (IFGHFEKPIF…IRVIQVIMIR (128 aa))) interacts with a nucleoside 3',5'-cyclic phosphate. Residues 362-372 (ASGTAGSTHTA) show a composition bias toward low complexity. Disordered regions lie at residues 362-405 (ASGT…ELSG) and 422-452 (NSYP…QPEV). Residues 435-449 (GNLSTRRGSITQQEQ) show a composition bias toward polar residues. A Phosphoserine modification is found at S443. A nucleoside 3',5'-cyclic phosphate-binding positions include 474 to 601 (ELGL…VVRR) and 590 to 717 (IVLD…LSHR). The PNPLA domain maps to 944-1110 (LVLGGGGARG…VNNLPGHLWR (167 aa)). Positions 948–953 (GGGARG) match the GXGXXG motif. The GXSXG signature appears at 975 to 979 (GVSIG). S977 acts as the Nucleophile in catalysis. Residue D1097 is the Proton acceptor of the active site. A DGA/G motif is present at residues 1097–1099 (DGG). The segment at 1367–1494 (MDKATQSTPP…NTNNETKNYL (128 aa)) is disordered. The span at 1370-1381 (ATQSTPPLQSKA) shows a compositional bias: polar residues. Basic and acidic residues-rich tracts occupy residues 1389-1420 (SKEE…RELS) and 1452-1483 (MDKK…KENR). The span at 1484 to 1494 (SNTNNETKNYL) shows a compositional bias: polar residues.

Belongs to the NTE family. In terms of assembly, interacts with Pka-C3; interaction inhibits the catalytic function of Pka-C3 and the esterase activity of sws.

It localises to the endoplasmic reticulum membrane. The enzyme catalyses a 1-acyl-sn-glycero-3-phosphocholine + H2O = sn-glycerol 3-phosphocholine + a fatty acid + H(+). Its function is as follows. Phospholipase B that deacylates intracellular phosphatidylcholine (PtdCho), generating glycerophosphocholine (GroPtdCho). This deacylation occurs at both sn-2 and sn-1 positions of PtdCho. Its specific chemical modification by certain organophosphorus (OP) compounds leads to distal axonopathy. Plays a role in the signaling mechanism between neurons and glia that regulates glia wrapping during development of the adult brain. Essential for membrane lipid homeostasis and cell survival in both neurons and glia of the adult brain. The protein is Neuropathy target esterase sws of Drosophila pseudoobscura pseudoobscura (Fruit fly).